We begin with the raw amino-acid sequence, 303 residues long: Bifunctional protein FolD (303 aa).

NADP(+) is bound by residues 175-177 (GVS) and Ile-243.

The protein belongs to the tetrahydrofolate dehydrogenase/cyclohydrolase family. In terms of assembly, homodimer.

The catalysed reaction is (6R)-5,10-methylene-5,6,7,8-tetrahydrofolate + NADP(+) = (6R)-5,10-methenyltetrahydrofolate + NADPH. The enzyme catalyses (6R)-5,10-methenyltetrahydrofolate + H2O = (6R)-10-formyltetrahydrofolate + H(+). It functions in the pathway one-carbon metabolism; tetrahydrofolate interconversion. Catalyzes the oxidation of 5,10-methylenetetrahydrofolate to 5,10-methenyltetrahydrofolate and then the hydrolysis of 5,10-methenyltetrahydrofolate to 10-formyltetrahydrofolate. This chain is Bifunctional protein FolD, found in Xanthomonas euvesicatoria pv. vesicatoria (strain 85-10) (Xanthomonas campestris pv. vesicatoria).